A 475-amino-acid chain; its full sequence is Ribulose bisphosphate carboxylase large chain (475 aa).

A propeptide spanning residues 1–2 (MS) is cleaved from the precursor. Pro-3 carries the N-acetylproline modification. Lys-14 is modified (N6,N6,N6-trimethyllysine). Residues Asn-123 and Thr-173 each coordinate substrate. Lys-175 serves as the catalytic Proton acceptor. Residue Lys-177 participates in substrate binding. Residues Lys-201, Asp-203, and Glu-204 each coordinate Mg(2+). N6-carboxylysine is present on Lys-201. The Proton acceptor role is filled by His-294. Residues Arg-295, His-327, and Ser-379 each coordinate substrate.

This sequence belongs to the RuBisCO large chain family. Type I subfamily. As to quaternary structure, heterohexadecamer of 8 large chains and 8 small chains; disulfide-linked. The disulfide link is formed within the large subunit homodimers. Requires Mg(2+) as cofactor. Post-translationally, the disulfide bond which can form in the large chain dimeric partners within the hexadecamer appears to be associated with oxidative stress and protein turnover.

The protein resides in the plastid. It localises to the chloroplast. It carries out the reaction 2 (2R)-3-phosphoglycerate + 2 H(+) = D-ribulose 1,5-bisphosphate + CO2 + H2O. The enzyme catalyses D-ribulose 1,5-bisphosphate + O2 = 2-phosphoglycolate + (2R)-3-phosphoglycerate + 2 H(+). In terms of biological role, ruBisCO catalyzes two reactions: the carboxylation of D-ribulose 1,5-bisphosphate, the primary event in carbon dioxide fixation, as well as the oxidative fragmentation of the pentose substrate in the photorespiration process. Both reactions occur simultaneously and in competition at the same active site. This Populus tremuloides (Quaking aspen) protein is Ribulose bisphosphate carboxylase large chain.